A 970-amino-acid chain; its full sequence is Probable histidine kinase 6 (970 aa).

Residues 1–12 are Cytoplasmic-facing; sequence MGKPEARSGWRN. The helical transmembrane segment at 13–33 threads the bilayer; it reads AAAAAWVLVAVACAAYMHWHL. Topologically, residues 34–306 are extracellular; sequence RRETMDRAEE…YRQKPPLPWS (273 aa). A CHASE domain is found at 82–294; that stretch reads FPSAIDQDTF…GDPFRAHEMR (213 aa). The chain crosses the membrane as a helical span at residues 307 to 327; sequence AITNPLGTFVIWMLVGYIICA. Residues 328–970 lie on the Cytoplasmic side of the membrane; the sequence is AWSRYDKVSE…LVVGTKESAV (643 aa). The region spanning 362–651 is the Histidine kinase domain; that stretch reads TVSHEIRTPM…TFTFSAVLKR (290 aa). H365 is modified (phosphohistidine; by autocatalysis). Response regulatory domains are found at residues 676–802 and 827–962; these read KAIL…QQLL and NILI…SRLV. D877 carries the post-translational modification 4-aspartylphosphate.

Post-translationally, activation probably requires a transfer of a phosphate group between a His in the transmitter domain and an Asp of the receiver domain. Highly expressed in spikelets and at lower levels in roots, young leaves, mature leaves and stems.

Its subcellular location is the cell membrane. It carries out the reaction ATP + protein L-histidine = ADP + protein N-phospho-L-histidine.. In terms of biological role, cytokinin receptor related to bacterial two-component regulators. Functions as a histidine kinase and transmits the stress signal to a downstream MAPK cascade. This Oryza sativa subsp. japonica (Rice) protein is Probable histidine kinase 6.